A 623-amino-acid chain; its full sequence is Protein EDS1L (623 aa).

Ala-2 is modified (N-acetylalanine). Catalysis depends on Ser-123, which acts as the Nucleophile. Residues Asp-187 and His-317 each act as charge relay system in the active site.

In terms of assembly, homodimer. Interacts with RPS4, RPS6, SNC1, SRFR1, AvrRps4 and HopA1. Interacts with PAD4 (via N-terminus). Interacts with SAG101. EDS1-SAG101 and EDS1-PAD4 form separate complexes in pathogen-unchallenged cells.

It is found in the nucleus. It localises to the cytoplasm. Its subcellular location is the microsome. Functionally, positive regulator of basal resistance and of effector-triggered immunity specifically mediated by TIR-NB-LRR resistance proteins. Disruption by bacterial effector of EDS1-TIR-NB-LRR resistance protein interactions constitutes the first step in resistance activation. Triggers early plant defenses and hypersensitive response independently of PAD4, and then recruits PAD4 to potentiate plant defenses through the accumulation of salicylic acid. Nuclear localization is essential for basal and TIR-NB-LRR-conditioned immunity and for reprogramming defense gene expression, while cytoplasmic EDS1 is required to induce a complete immune response. Heterodimerization with PAD4 or SGA101 is necessary for TNL-mediated effector-triggered immunity. Contributes to nonhost resistance against E.amylovora. Has no direct lipase activity. The sequence is that of Protein EDS1L from Arabidopsis thaliana (Mouse-ear cress).